The chain runs to 260 residues: PsbP domain-containing protein 4, chloroplastic (260 aa).

It belongs to the PsbP family.

It localises to the plastid. It is found in the chloroplast thylakoid lumen. The sequence is that of PsbP domain-containing protein 4, chloroplastic (PPD4) from Arabidopsis thaliana (Mouse-ear cress).